A 2467-amino-acid polypeptide reads, in one-letter code: Polyprotein P1234 (2467 aa).

Positions 27–258 (ESQQVTPNDH…ESRKLLRSWH (232 aa)) constitute an Alphavirus-like MT domain. The segment at 243-262 (GSTLYTESRKLLRSWHLPSV) is nsP1 membrane-binding. Residues cysteine 416 and cysteine 418 are each lipidated (S-palmitoyl cysteine; by host). The 153-residue stretch at 689–841 (DLINPPFHEF…HNICTRVLHK (153 aa)) folds into the (+)RNA virus helicase ATP-binding domain. 720–727 (GVPGSGKS) is an a ribonucleoside 5'-triphosphate binding site. The 149-residue stretch at 842-990 (SISRRCTLPV…LEEWQEEHDG (149 aa)) folds into the (+)RNA virus helicase C-terminal domain. The Peptidase C9 domain occupies 1003 to 1325 (DPFQNKAKVC…QKLSSMYACN (323 aa)). The tract at residues 1004–1023 (PFQNKAKVCWAKCLVQVLET) is nucleolus localization signal. Residue cysteine 1012 is the For cysteine protease nsP2 activity of the active site. The short motif at 1056–1065 (TRYYGVDLDS) is the Nuclear export signal element. Residue histidine 1081 is the For cysteine protease nsP2 activity of the active site. The Nuclear localization signal signature appears at 1180-1184 (PHKRV). Residues 1332-1492 (CAPSYRVRRA…KIQEAIDRRT (161 aa)) enclose the Macro domain. Positions 1342, 1356, 1364, 1444, and 1446 each coordinate ADP-D-ribose. Residues cysteine 1594, cysteine 1596, cysteine 1619, and cysteine 1637 each coordinate Zn(2+). Positions 1766–1803 (VRKVATEPPSEPEAPIPAPRKRRTTSTTPPHNPGDFVP) are disordered. A compositionally biased stretch (pro residues) spans 1774–1783 (PSEPEAPIPA). Short sequence motifs (FGDF; binding to host G3BP1) lie at residues 1820–1823 (FGDL) and 1841–1844 (FGDI). The 116-residue stretch at 2222-2337 (AVLETDIASF…GVRSDPLMAE (116 aa)) folds into the RdRp catalytic domain.

In terms of assembly, interacts with non-structural protein 3. Interacts with RNA-directed RNA polymerase nsP4. Interacts with protease nsP2. interacts with itself. Interacts with mRNA-capping enzyme nsP1. Interacts with host DDX1. Interacts with host DDX3. Interacts (via C-terminus) with host G3BP1; this interaction inhibits the formation of host stress granules on viral mRNAs and the nsp3-G3BP1 complexes bind viral RNAs and probably orchestrate the assembly of viral replication complexes. Interacts (via C-terminus) with host G3BP2; this interaction inhibits the formation of host stress granules on viral mRNAs and the nsp3-G3BP2 complexes bind viral RNAs and probably orchestrate the assembly of viral replication complexes. As to quaternary structure, interacts with mRNA-capping enzyme nsP1. Interacts with protease nsP2. interacts with itself. In terms of assembly, interacts with RNA-directed RNA polymerase nsP4. Interacts with mRNA-capping enzyme nsP1. Interacts with KPNA1/karyopherin-alpha1; this interaction probably allows the active transport of protease nsP2 into the host nucleus. The cofactor is Mg(2+). Mn(2+) is required as a cofactor. In terms of processing, specific enzymatic cleavages in vivo yield mature proteins. The processing of the polyprotein is temporally regulated. In early stages (1.7 hpi), P1234 is first cleaved in trans through its nsP2 protease activity, releasing P123' and nsP4, which associate to form the early replication complex. At the same time, P1234 is also cut at the nsP1/nsP2 site early in infection but with lower efficiency. After replication of the viral minus-strand RNAs (4 hpi), the polyproteins are cut at the nsP1/nsP2 and nsP2/nsP3 sites very efficiently, preventing accumulation of P123' and P1234 and allowing the formation of the late replication complex. NsP3'/nsP4 site is not cleaved anymore and P34 is produced rather than nsP4. Specific enzymatic cleavages in vivo yield mature proteins. The processing of the polyprotein is temporally regulated. In early stages (1.7 hpi), P123 is cleaved at the nsP1/nsP2 site with low efficiency. After replication of the viral minus-strand RNAs (4 hpi), the polyproteins are cut at the nsP1/nsP2 and nsP2/nsP3 sites very efficiently, preventing accumulation of P123 and allowing the formation of the late replication complex. Post-translationally, specific enzymatic cleavages in vivo yield mature proteins. The processing of the polyprotein is temporally regulated. In early stages (1.7 hpi), P123' is cleaved at the nsP1/nsP2 site with low efficiency. After replication of the viral minus-strand RNAs (4 hpi), the polyproteins are cut at the nsP1/nsP2 and nsP2/nsP3 sites very efficiently, preventing accumulation of P123' and allowing the formation of the late replication complex. In terms of processing, palmitoylated by host palmitoyltransferases ZDHHC2 and ZDHHC19. Phosphorylated by host on serines and threonines. Post-translationally, ubiquitinated; targets the protein for rapid degradation via the ubiquitin system. Nsp4 is present in extremely low quantities due to low frequency of translation through the amber stop-codon and the degradation by the ubiquitin pathway.

Its subcellular location is the host cytoplasmic vesicle membrane. The protein localises to the host cell membrane. It localises to the host cell projection. The protein resides in the host filopodium. It is found in the host nucleus. Its subcellular location is the host cytoplasm. The enzyme catalyses GTP + S-adenosyl-L-methionine = N(7)-methyl-GTP + S-adenosyl-L-homocysteine. It carries out the reaction N(7)-methyl-GTP + L-histidyl-[protein] = N(tele)-(N(7)-methylguanosine 5'-phospho)-L-histidyl-[protein] + diphosphate. The catalysed reaction is N(tele)-(N(7)-methylguanosine 5'-phospho)-L-histidyl-[protein] + a 5'-end diphospho-(purine-ribonucleoside) in mRNA + H(+) = a 5'-end (N(7)-methyl 5'-triphosphoguanosine)-(purine-ribonucleoside) in mRNA + L-histidyl-[protein]. It catalyses the reaction a 5'-end triphospho-ribonucleoside in mRNA + H2O = a 5'-end diphospho-ribonucleoside in mRNA + phosphate + H(+). The enzyme catalyses a ribonucleoside 5'-triphosphate + H2O = a ribonucleoside 5'-diphosphate + phosphate + H(+). It carries out the reaction ATP + H2O = ADP + phosphate + H(+). The catalysed reaction is RNA(n) + a ribonucleoside 5'-triphosphate = RNA(n+1) + diphosphate. It catalyses the reaction RNA(n) + ATP = RNA(n)-3'-adenine ribonucleotide + diphosphate. The enzyme catalyses 4-O-(ADP-D-ribosyl)-L-aspartyl-[protein] + H2O = L-aspartyl-[protein] + ADP-D-ribose + H(+). It carries out the reaction 5-O-(ADP-D-ribosyl)-L-glutamyl-[protein] + H2O = L-glutamyl-[protein] + ADP-D-ribose + H(+). The catalysed reaction is ADP-alpha-D-ribose 1''-phosphate + H2O = ADP-D-ribose + phosphate. Inactive precursor of the viral replicase, which is activated by cleavages carried out by the viral protease nsP2. Functionally, the early replication complex formed by the polyprotein P123 and nsP4 synthesizes minus-strand RNAs. As soon P123 is cleaved into mature proteins, the plus-strand RNAs synthesis begins. Its function is as follows. The early replication complex formed by the polyprotein P123' and nsP4 synthesizes minus-strand RNAs. Polyprotein P123' is a short-lived polyprotein that accumulates during early stage of infection. As soon P123' is cleaved into mature proteins, the plus-strand RNAs synthesis begins. In terms of biological role, cytoplasmic capping enzyme that catalyzes two virus-specific reactions: methyltransferase and nsP1 guanylyltransferase. mRNA-capping is necessary since all viral RNAs are synthesized in the cytoplasm, and host capping enzymes are restricted to the nucleus. The enzymatic reaction involves a covalent link between 7-methyl-GMP and nsP1, whereas eukaryotic capping enzymes form a covalent complex only with GMP. nsP1 capping consists in the following reactions: GTP is first methylated into 7-methyl-GMP and then is covalently linked to nsP1 to form the m7GMp-nsP1 complex from which 7-methyl-GMP complex is transferred to the mRNA to create the cap structure. NsP1 is needed for the initiation of the minus-strand RNAs synthesis. Probably serves as a membrane anchor for the replication complex composed of nsP1-nsP4. Palmitoylated nsP1 is remodeling host cell cytoskeleton, and induces filopodium-like structure formation at the surface of the host cell. Multifunctional protein whose N-terminus is part of the RNA polymerase complex and displays NTPase, RNA triphosphatase and helicase activities. NTPase and RNA triphosphatase are involved in viral RNA capping and helicase keeps a check on the dsRNA replication intermediates. The C-terminus harbors a protease that specifically cleaves the polyproteins and releases the mature proteins. Required for the shutoff of minus-strand RNAs synthesis. Specifically inhibits the host IFN response by promoting the nuclear export of host STAT1. Also inhibits host transcription by inducing rapid proteasome-dependent degradation of POLR2A, a catalytic subunit of the RNAPII complex. The resulting inhibition of cellular protein synthesis serves to ensure maximal viral gene expression and to evade host immune response. Functionally, seems to be essential for minus-strand RNAs and subgenomic 26S mRNAs synthesis. Displays mono-ADP-ribosylhydrolase activity. ADP-ribosylation is a post-translational modification that controls various processes of the host cell and the virus probably needs to revert it for optimal viral replication. Binds proteins of FXR family and sequesters them into the viral RNA replication complexes thereby inhibiting the formation of host stress granules on viral mRNAs. The nsp3'-FXR complexes bind viral RNAs and probably orchestrate the assembly of viral replication complexes, thanks to the ability of FXR family members to self-assemble and bind DNA. Its function is as follows. Seems to be essential for minus-strand RNAs and subgenomic 26S mRNAs synthesis. Displays mono-ADP-ribosylhydrolase activity. ADP-ribosylation is a post-translantional modification that controls various processes of the host cell and the virus probably needs to revert it for optimal viral replication. Binds proteins of G3BP family and sequesters them into the viral RNA replication complexes thereby inhibiting the formation of host stress granules on viral mRNAs. The nsp3-G3BP complexes bind viral RNAs and probably orchestrate the assembly of viral replication complexes, thanks to the ability of G3BP family members to self-assemble and bind DNA. In terms of biological role, RNA dependent RNA polymerase. Replicates genomic and antigenomic RNA by recognizing replications specific signals. The early replication complex formed by the polyprotein P123 and nsP4 synthesizes minus-strand RNAs. The late replication complex composed of fully processed nsP1-nsP4 is responsible for the production of genomic and subgenomic plus-strand RNAs. The core catalytic domain of nsP4 also possesses terminal adenylyltransferase (TATase) activity that is probably involved in maintenance and repair of the poly(A) tail, an element required for replication of the viral genome. The polypeptide is Polyprotein P1234 (Sagiyama virus (SAGV)).